Reading from the N-terminus, the 770-residue chain is Transducin-like enhancer protein 1 (770 aa).

The q domain stretch occupies residues M1–Q131. Disordered stretches follow at residues L128–P157 and H176–D348. A GP domain region spans residues H132–S199. Basic and acidic residues-rich tracts occupy residues A178–P196 and R209–D246. The segment at N200–P268 is ccN domain. Positions K225–K228 match the Nuclear localization signal motif. At S239 the chain carries Phosphoserine. Residues P257 to H266 show a composition bias toward low complexity. S259, S263, and S267 each carry phosphoserine; by CDK1. Basic and acidic residues predominate over residues S267–A283. The tract at residues R269–V450 is SP domain. Over residues S284–S298 the composition is skewed to low complexity. S286 carries the post-translational modification Phosphoserine. Positions K300–A310 are enriched in basic and acidic residues. WD repeat units lie at residues G470 to T501, N528 to D558, S572 to D602, G614 to D644, L696 to R726, and K737 to E767.

Belongs to the WD repeat Groucho/TLE family. In terms of assembly, homooligomer and heterooligomer with other family members. Binds RUNX1, RUNX3, FOXA2, KDM6A, UTY, histone H3, HESX1, ESRRG and the NF-kappa-B subunit RELA. Interacts with HES1 (via WRPW motif). Binds TCF7, LEF1, TCF7L1 and TCF7L2. Interacts with SIX3. Interacts with EFNB1. Interacts with TLE4. Interacts with FOXG1/BF-1; the interaction is inhibited by TLE6/GRG6. In terms of processing, phosphorylated, probably by CDK1. The degree of phosphorylation varies throughout the cell cycle, and is highest at the G2/M transition. Becomes hyperphosphorylated in response to cell differentiation and interaction with HES1 or RUNX1. Ubiquitinated by XIAP/BIRC4. In all tissues examined, mostly in brain, liver and muscle.

It localises to the nucleus. Transcriptional corepressor that binds to a number of transcription factors. Inhibits NF-kappa-B-regulated gene expression. Inhibits the transcriptional activation mediated by FOXA2, and by CTNNB1 and TCF family members in Wnt signaling. Enhances FOXG1/BF-1- and HES1-mediated transcriptional repression. The effects of full-length TLE family members may be modulated by association with dominant-negative AES. Unusual function as coactivator for ESRRG. This Homo sapiens (Human) protein is Transducin-like enhancer protein 1 (TLE1).